Here is a 301-residue protein sequence, read N- to C-terminus: Recombination-associated protein RdgC (301 aa).

The protein belongs to the RdgC family.

The protein localises to the cytoplasm. The protein resides in the nucleoid. May be involved in recombination. The chain is Recombination-associated protein RdgC from Stenotrophomonas maltophilia (strain R551-3).